Here is a 405-residue protein sequence, read N- to C-terminus: Acetate kinase (405 aa).

N7 lines the Mg(2+) pocket. K14 provides a ligand contact to ATP. R92 lines the substrate pocket. Residue D149 is the Proton donor/acceptor of the active site. ATP contacts are provided by residues 209-213 (HLGNG) and 284-286 (DMR). E389 contributes to the Mg(2+) binding site.

Belongs to the acetokinase family. Homodimer. Mg(2+) is required as a cofactor. Mn(2+) serves as cofactor.

The protein localises to the cytoplasm. It catalyses the reaction acetate + ATP = acetyl phosphate + ADP. It participates in metabolic intermediate biosynthesis; acetyl-CoA biosynthesis; acetyl-CoA from acetate: step 1/2. Catalyzes the formation of acetyl phosphate from acetate and ATP. Can also catalyze the reverse reaction. The chain is Acetate kinase from Borreliella burgdorferi (strain ZS7) (Borrelia burgdorferi).